A 364-amino-acid chain; its full sequence is Threonine-phosphate decarboxylase (364 aa).

Residues 8-9, asparagine 32, and asparagine 157 contribute to the O-phospho-L-threonine site; that span reads HG. Lysine 216 carries the post-translational modification N6-(pyridoxal phosphate)lysine. 2 residues coordinate O-phospho-L-threonine: arginine 323 and arginine 337.

The protein belongs to the class-II pyridoxal-phosphate-dependent aminotransferase family. Homodimer. Pyridoxal 5'-phosphate is required as a cofactor.

The enzyme catalyses O-phospho-L-threonine + H(+) = (R)-1-aminopropan-2-yl phosphate + CO2. It participates in cofactor biosynthesis; adenosylcobalamin biosynthesis. Its function is as follows. Decarboxylates L-threonine-O-3-phosphate to yield (R)-1-amino-2-propanol O-2-phosphate, the precursor for the linkage between the nucleotide loop and the corrin ring in cobalamin. This chain is Threonine-phosphate decarboxylase (cobD), found in Salmonella typhimurium (strain LT2 / SGSC1412 / ATCC 700720).